Reading from the N-terminus, the 284-residue chain is Deoxyribonuclease-1 (284 aa).

Positions 1–22 (MRYTGLMGILLTLVNLLQLAAT) are cleaved as a signal peptide. N40 is a glycosylation site (N-linked (GlcNAc...) asparagine). E100 is a catalytic residue. Residues C123 and C126 are joined by a disulfide bond. N128 carries an N-linked (GlcNAc...) asparagine glycan. Residue H156 is part of the active site. A disulfide bridge connects residues C195 and C231.

This sequence belongs to the DNase I family. It depends on Ca(2+) as a cofactor. The cofactor is Mg(2+).

The protein localises to the secreted. It localises to the zymogen granule. It is found in the nucleus envelope. It catalyses the reaction Endonucleolytic cleavage to 5'-phosphodinucleotide and 5'-phosphooligonucleotide end-products.. Serum endocuclease secreted into body fluids by a wide variety of exocrine and endocrine organs. Expressed by non-hematopoietic tissues and preferentially cleaves protein-free DNA. Among other functions, seems to be involved in cell death by apoptosis. Binds specifically to G-actin and blocks actin polymerization. Together with DNASE1L3, plays a key role in degrading neutrophil extracellular traps (NETs). NETs are mainly composed of DNA fibers and are released by neutrophils to bind pathogens during inflammation. Degradation of intravascular NETs by DNASE1 and DNASE1L3 is required to prevent formation of clots that obstruct blood vessels and cause organ damage following inflammation. The chain is Deoxyribonuclease-1 (Dnase1) from Rattus norvegicus (Rat).